The primary structure comprises 205 residues: MHKIGLIDYGMGNIHSVTKSLESLGEEIILIKNFSESKACKAIILPGVGAFDPAMINLINTDLIIDLKNWINSGKSFLGICLGLQLLFESSDEGKVQGLGILKGKIQKIPNIVNQRIPHMGWCELLPTKTNTLLELEELNNWVYFVHSYHAIPDDFSIIAAQVNYGSEKLTAMIENDNLLACQFHPEKSGKTGEKLLRRWLSNIQ.

A Glutamine amidotransferase type-1 domain is found at 3 to 205 (KIGLIDYGMG…LLRRWLSNIQ (203 aa)). The Nucleophile role is filled by Cys-81. Residues His-185 and Glu-187 contribute to the active site.

In terms of assembly, heterodimer of HisH and HisF.

It localises to the cytoplasm. It carries out the reaction 5-[(5-phospho-1-deoxy-D-ribulos-1-ylimino)methylamino]-1-(5-phospho-beta-D-ribosyl)imidazole-4-carboxamide + L-glutamine = D-erythro-1-(imidazol-4-yl)glycerol 3-phosphate + 5-amino-1-(5-phospho-beta-D-ribosyl)imidazole-4-carboxamide + L-glutamate + H(+). The enzyme catalyses L-glutamine + H2O = L-glutamate + NH4(+). The protein operates within amino-acid biosynthesis; L-histidine biosynthesis; L-histidine from 5-phospho-alpha-D-ribose 1-diphosphate: step 5/9. Functionally, IGPS catalyzes the conversion of PRFAR and glutamine to IGP, AICAR and glutamate. The HisH subunit catalyzes the hydrolysis of glutamine to glutamate and ammonia as part of the synthesis of IGP and AICAR. The resulting ammonia molecule is channeled to the active site of HisF. This chain is Imidazole glycerol phosphate synthase subunit HisH, found in Prochlorococcus marinus (strain MIT 9312).